The chain runs to 154 residues: Lipoprotein signal peptidase (154 aa).

2 helical membrane-spanning segments follow: residues 55-75 (GHMWFFYLITVIVIGIIIYIM) and 84-104 (LFSISLAFILGGAIGNFIDRI). Catalysis depends on residues D111 and D129. Residues 124–144 (IFNVADAALSVGVVLMLVYVF) traverse the membrane as a helical segment.

It belongs to the peptidase A8 family.

It localises to the cell membrane. The enzyme catalyses Release of signal peptides from bacterial membrane prolipoproteins. Hydrolyzes -Xaa-Yaa-Zaa-|-(S,diacylglyceryl)Cys-, in which Xaa is hydrophobic (preferably Leu), and Yaa (Ala or Ser) and Zaa (Gly or Ala) have small, neutral side chains.. It participates in protein modification; lipoprotein biosynthesis (signal peptide cleavage). This protein specifically catalyzes the removal of signal peptides from prolipoproteins. This is Lipoprotein signal peptidase from Listeria innocua serovar 6a (strain ATCC BAA-680 / CLIP 11262).